Consider the following 372-residue polypeptide: Cytochrome b (372 aa).

4 helical membrane passes run 25–45 (FGSM…FLAI), 69–90 (WIMQ…YIHI), 105–125 (WLSG…GYVL), and 170–190 (FFAL…IHII). Histidine 75 and histidine 89 together coordinate heme b. Residues histidine 174 and histidine 188 each contribute to the heme b site. Histidine 193 provides a ligand contact to a ubiquinone. 4 consecutive transmembrane segments (helical) span residues 218–238 (YKDM…LSFS), 280–300 (LGGT…PFTH), 312–332 (LTQT…WTAT), and 339–358 (FISI…IINP).

The protein belongs to the cytochrome b family. The cytochrome bc1 complex contains 3 respiratory subunits (MT-CYB, CYC1 and UQCRFS1), 2 core proteins (UQCRC1 and UQCRC2) and probably 6 low-molecular weight proteins. Requires heme b as cofactor.

It is found in the mitochondrion inner membrane. Its function is as follows. Component of the ubiquinol-cytochrome c reductase complex (complex III or cytochrome b-c1 complex) that is part of the mitochondrial respiratory chain. The b-c1 complex mediates electron transfer from ubiquinol to cytochrome c. Contributes to the generation of a proton gradient across the mitochondrial membrane that is then used for ATP synthesis. The sequence is that of Cytochrome b (MT-CYB) from Dendroaspis polylepis polylepis (Black mamba).